A 245-amino-acid chain; its full sequence is tRNA1(Val) (adenine(37)-N6)-methyltransferase (245 aa).

The protein belongs to the methyltransferase superfamily. tRNA (adenine-N(6)-)-methyltransferase family.

The protein resides in the cytoplasm. It catalyses the reaction adenosine(37) in tRNA1(Val) + S-adenosyl-L-methionine = N(6)-methyladenosine(37) in tRNA1(Val) + S-adenosyl-L-homocysteine + H(+). In terms of biological role, specifically methylates the adenine in position 37 of tRNA(1)(Val) (anticodon cmo5UAC). This is tRNA1(Val) (adenine(37)-N6)-methyltransferase from Escherichia coli O139:H28 (strain E24377A / ETEC).